The following is a 382-amino-acid chain: Serine/threonine-protein phosphatase 2A activator 2 (382 aa).

The interval 363 to 382 (SHKGVPTLGNRPGIKPIPFD) is disordered.

The protein belongs to the PTPA-type PPIase family.

It is found in the cytoplasm. The catalysed reaction is [protein]-peptidylproline (omega=180) = [protein]-peptidylproline (omega=0). In terms of biological role, PPIases accelerate the folding of proteins. It catalyzes the cis-trans isomerization of proline imidic peptide bonds in oligopeptides. Acts as a regulatory subunit for PP2A-like phosphatases modulating their activity or substrate specificity, probably by inducing a conformational change in the catalytic subunit, a direct target of the PPIase. Can reactivate inactive phosphatase PP2A-phosphatase methylesterase complexes (PP2Ai) in presence of ATP and Mg(2+) by dissociating the inactive form from the complex. This chain is Serine/threonine-protein phosphatase 2A activator 2 (RRD2), found in Cryptococcus neoformans var. neoformans serotype D (strain B-3501A) (Filobasidiella neoformans).